A 171-amino-acid chain; its full sequence is SPbeta prophage-derived uncharacterized protein YokC (171 aa).

The sequence is that of SPbeta prophage-derived uncharacterized protein YokC (yokC) from Bacillus subtilis (strain 168).